A 336-amino-acid polypeptide reads, in one-letter code: Phenylalanine--tRNA ligase alpha subunit (336 aa).

Glutamate 259 serves as a coordination point for Mg(2+).

The protein belongs to the class-II aminoacyl-tRNA synthetase family. Phe-tRNA synthetase alpha subunit type 1 subfamily. In terms of assembly, tetramer of two alpha and two beta subunits. Requires Mg(2+) as cofactor.

The protein resides in the cytoplasm. The enzyme catalyses tRNA(Phe) + L-phenylalanine + ATP = L-phenylalanyl-tRNA(Phe) + AMP + diphosphate + H(+). In Tropheryma whipplei (strain TW08/27) (Whipple's bacillus), this protein is Phenylalanine--tRNA ligase alpha subunit.